A 270-amino-acid polypeptide reads, in one-letter code: Glutamate racemase (270 aa).

Substrate contacts are provided by residues 7-8 (DS) and 39-40 (YG). The active-site Proton donor/acceptor is the C70. Position 71 to 72 (71 to 72 (NT)) interacts with substrate. C194 functions as the Proton donor/acceptor in the catalytic mechanism. 195-196 (TH) provides a ligand contact to substrate.

The protein belongs to the aspartate/glutamate racemases family.

The enzyme catalyses L-glutamate = D-glutamate. Its pathway is cell wall biogenesis; peptidoglycan biosynthesis. Provides the (R)-glutamate required for cell wall biosynthesis. The sequence is that of Glutamate racemase from Paracoccus denitrificans (strain Pd 1222).